We begin with the raw amino-acid sequence, 213 residues long: MKFQLQHKTIFLRQLGIQPYEPISDAMHLFTEQRDTNTPDEIWLVQHPKVFTQGQAGKAEHLLSLGDIPVIQSDRGGQVTYHGPGQQVMYVMIDIKRARIGVRQLVTAIEDTVIKTLAHFGVKAYARPDAPGVYVNEAKICSLGLRIRKGCSFHGLALNIAMDLEPFQRINPCGYAGMKMIQLSDLVPGITVEQVQPVLVEKFCQQLGFKLNS.

The 176-residue stretch at 36-211 (TNTPDEIWLV…KFCQQLGFKL (176 aa)) folds into the BPL/LPL catalytic domain. Substrate contacts are provided by residues 75–82 (RGGQVTYH), 142–144 (SLG), and 155–157 (GLA). Residue cysteine 173 is the Acyl-thioester intermediate of the active site.

Belongs to the LipB family.

Its subcellular location is the cytoplasm. It carries out the reaction octanoyl-[ACP] + L-lysyl-[protein] = N(6)-octanoyl-L-lysyl-[protein] + holo-[ACP] + H(+). The protein operates within protein modification; protein lipoylation via endogenous pathway; protein N(6)-(lipoyl)lysine from octanoyl-[acyl-carrier-protein]: step 1/2. In terms of biological role, catalyzes the transfer of endogenously produced octanoic acid from octanoyl-acyl-carrier-protein onto the lipoyl domains of lipoate-dependent enzymes. Lipoyl-ACP can also act as a substrate although octanoyl-ACP is likely to be the physiological substrate. The chain is Octanoyltransferase from Photorhabdus laumondii subsp. laumondii (strain DSM 15139 / CIP 105565 / TT01) (Photorhabdus luminescens subsp. laumondii).